Reading from the N-terminus, the 246-residue chain is NADH-quinone oxidoreductase subunit C (246 aa).

It belongs to the complex I 30 kDa subunit family. In terms of assembly, NDH-1 is composed of 14 different subunits. Subunits NuoB, C, D, E, F, and G constitute the peripheral sector of the complex.

It is found in the cell inner membrane. The catalysed reaction is a quinone + NADH + 5 H(+)(in) = a quinol + NAD(+) + 4 H(+)(out). In terms of biological role, NDH-1 shuttles electrons from NADH, via FMN and iron-sulfur (Fe-S) centers, to quinones in the respiratory chain. The immediate electron acceptor for the enzyme in this species is believed to be ubiquinone. Couples the redox reaction to proton translocation (for every two electrons transferred, four hydrogen ions are translocated across the cytoplasmic membrane), and thus conserves the redox energy in a proton gradient. This is NADH-quinone oxidoreductase subunit C from Halorhodospira halophila (strain DSM 244 / SL1) (Ectothiorhodospira halophila (strain DSM 244 / SL1)).